Consider the following 160-residue polypeptide: 6,7-dimethyl-8-ribityllumazine synthase (160 aa).

5-amino-6-(D-ribitylamino)uracil is bound by residues Trp-28, 59-61 (ALE), and 81-83 (CVI). 86 to 87 (ET) serves as a coordination point for (2S)-2-hydroxy-3-oxobutyl phosphate. His-89 serves as the catalytic Proton donor. Residue Asn-114 coordinates 5-amino-6-(D-ribitylamino)uracil. (2S)-2-hydroxy-3-oxobutyl phosphate is bound at residue Arg-128.

This sequence belongs to the DMRL synthase family.

It carries out the reaction (2S)-2-hydroxy-3-oxobutyl phosphate + 5-amino-6-(D-ribitylamino)uracil = 6,7-dimethyl-8-(1-D-ribityl)lumazine + phosphate + 2 H2O + H(+). The protein operates within cofactor biosynthesis; riboflavin biosynthesis; riboflavin from 2-hydroxy-3-oxobutyl phosphate and 5-amino-6-(D-ribitylamino)uracil: step 1/2. In terms of biological role, catalyzes the formation of 6,7-dimethyl-8-ribityllumazine by condensation of 5-amino-6-(D-ribitylamino)uracil with 3,4-dihydroxy-2-butanone 4-phosphate. This is the penultimate step in the biosynthesis of riboflavin. This chain is 6,7-dimethyl-8-ribityllumazine synthase, found in Corynebacterium urealyticum (strain ATCC 43042 / DSM 7109).